The following is an 819-amino-acid chain: Endonuclease MutS2 (819 aa).

339 to 346 (GPNTGGKT) is a binding site for ATP. In terms of domain architecture, Smr spans 744-819 (VDVRGLRVDE…GAGVTVAELA (76 aa)).

It belongs to the DNA mismatch repair MutS family. MutS2 subfamily. Homodimer. Binds to stalled ribosomes, contacting rRNA.

In terms of biological role, endonuclease that is involved in the suppression of homologous recombination and thus may have a key role in the control of bacterial genetic diversity. Acts as a ribosome collision sensor, splitting the ribosome into its 2 subunits. Detects stalled/collided 70S ribosomes which it binds and splits by an ATP-hydrolysis driven conformational change. Acts upstream of the ribosome quality control system (RQC), a ribosome-associated complex that mediates the extraction of incompletely synthesized nascent chains from stalled ribosomes and their subsequent degradation. Probably generates substrates for RQC. The protein is Endonuclease MutS2 of Gemmatimonas aurantiaca (strain DSM 14586 / JCM 11422 / NBRC 100505 / T-27).